We begin with the raw amino-acid sequence, 111 residues long: UPF0122 protein YofM (111 aa).

This sequence belongs to the UPF0122 family.

In terms of biological role, might take part in the signal recognition particle (SRP) pathway. This is inferred from the conservation of its genetic proximity to ftsY/ffh. May be a regulatory protein. The sequence is that of UPF0122 protein YofM (yofM) from Lactococcus lactis subsp. lactis (strain IL1403) (Streptococcus lactis).